The following is a 180-amino-acid chain: Shikimate kinase (180 aa).

14 to 19 (GAGKSC) is an ATP binding site. S18 lines the Mg(2+) pocket. Residues D36, R60, and G82 each coordinate substrate. R120 contacts ATP. R139 contacts substrate.

Belongs to the shikimate kinase family. As to quaternary structure, monomer. Mg(2+) serves as cofactor.

The protein localises to the cytoplasm. It catalyses the reaction shikimate + ATP = 3-phosphoshikimate + ADP + H(+). It participates in metabolic intermediate biosynthesis; chorismate biosynthesis; chorismate from D-erythrose 4-phosphate and phosphoenolpyruvate: step 5/7. Its function is as follows. Catalyzes the specific phosphorylation of the 3-hydroxyl group of shikimic acid using ATP as a cosubstrate. This chain is Shikimate kinase, found in Xanthomonas campestris pv. campestris (strain 8004).